Consider the following 451-residue polypeptide: Protein-tyrosine kinase 6 (451 aa).

The 65-residue stretch at H8 to T72 folds into the SH3 domain. Phosphotyrosine; by autocatalysis is present on residues Y13, Y61, Y66, and Y114. The SH2 domain maps to W78–C170. Positions R171–E190 are linker. The Protein kinase domain occupies F191–T445. ATP is bound by residues L197–V205 and K219. D312 serves as the catalytic Proton acceptor. Residues Y342 and Y351 each carry the phosphotyrosine; by autocatalysis modification. Y447 carries the phosphotyrosine modification.

It belongs to the protein kinase superfamily. Tyr protein kinase family. BRK/PTK6/SIK subfamily. In terms of assembly, interacts with GAP-A.p65. Interacts (via SH3 and SH2 domains) with KHDRBS1. Interacts (via SH3 and SH2 domains) with phosphorylated IRS4. Interacts with ADAM15. Interacts (via SH3 domain) with SFPQ. Interacts with EGFR and ERBB2. Interacts with STAP2. Interacts with PNX. Interacts with SFPQ. Interacts with PTK/ATK. Interacts with CTNNB1. In terms of processing, autophosphorylated. Autophosphorylation of Tyr-342 leads to an increase of kinase activity. Tyr-447 binds to the SH2 domain when phosphorylated and negatively regulates kinase activity. Epithelia-specific. Very high level in colon and high levels in small intestine and prostate, and low levels in some fetal tissues. Not expressed in breast or ovarian tissue but expressed in high percentage of breast and ovarian cancers. Also overexpressed in some metastatic melanomas, lymphomas, colon cancers, squamous cell carcinomas and prostate cancers. Also found in melanocytes. Not expressed in heart, brain, placenta, lung, liver, skeletal muscle, kidney and pancreas. Isoform 2 is present in prostate epithelial cell lines derived from normal prostate and prostate adenocarcinomas, as well as in a variety of cell lines.

The protein localises to the cytoplasm. Its subcellular location is the nucleus. The protein resides in the cell projection. It is found in the ruffle. It localises to the membrane. The catalysed reaction is L-tyrosyl-[protein] + ATP = O-phospho-L-tyrosyl-[protein] + ADP + H(+). With respect to regulation, activated by EGF, NRG1 and IGF1. Inhibited by SOCS3 to phosphorylate STAT3. Stabilized in the inactive form by an association between the SH3 domain and the SH2-TK linker region. Interaction between Trp-184 within SH2-TK linker region and the catalytic domain appears essential for positive regulation of kinase activity. Its function is as follows. Non-receptor tyrosine-protein kinase implicated in the regulation of a variety of signaling pathways that control the differentiation and maintenance of normal epithelia, as well as tumor growth. Function seems to be context dependent and differ depending on cell type, as well as its intracellular localization. A number of potential nuclear and cytoplasmic substrates have been identified. These include the RNA-binding proteins: KHDRBS1/SAM68, KHDRBS2/SLM1, KHDRBS3/SLM2 and SFPQ/PSF; transcription factors: STAT3 and STAT5A/B and a variety of signaling molecules: ARHGAP35/p190RhoGAP, PXN/paxillin, BTK/ATK, STAP2/BKS. Phosphorylates the GTPase-activating protein ARAP1 following EGF stimulation which enhances EGFR signaling by delaying EGFR down-regulation. Also associates with a variety of proteins that are likely upstream of PTK6 in various signaling pathways, or for which PTK6 may play an adapter-like role. These proteins include ADAM15, EGFR, ERBB2, ERBB3 and IRS4. In normal or non-tumorigenic tissues, PTK6 promotes cellular differentiation and apoptosis. In tumors PTK6 contributes to cancer progression by sensitizing cells to mitogenic signals and enhancing proliferation, anchorage-independent survival and migration/invasion. Association with EGFR, ERBB2, ERBB3 may contribute to mammary tumor development and growth through enhancement of EGF-induced signaling via BTK/AKT and PI3 kinase. Contributes to migration and proliferation by contributing to EGF-mediated phosphorylation of ARHGAP35/p190RhoGAP, which promotes association with RASA1/p120RasGAP, inactivating RhoA while activating RAS. EGF stimulation resulted in phosphorylation of PNX/Paxillin by PTK6 and activation of RAC1 via CRK/CrKII, thereby promoting migration and invasion. PTK6 activates STAT3 and STAT5B to promote proliferation. Nuclear PTK6 may be important for regulating growth in normal epithelia, while cytoplasmic PTK6 might activate oncogenic signaling pathways. In terms of biological role, inhibits PTK6 phosphorylation and PTK6 association with other tyrosine-phosphorylated proteins. The sequence is that of Protein-tyrosine kinase 6 (PTK6) from Homo sapiens (Human).